A 798-amino-acid chain; its full sequence is Protocadherin beta-13 (798 aa).

Residues 1–28 (MEASGKLICRQRQVLFSFLLLGLSLAGA) form the signal peptide. At 29-690 (AEPRSYSVVE…AQADLLTVYL (662 aa)) the chain is on the extracellular side. Cadherin domains follow at residues 36 to 134 (VVEE…SPVF), 139 to 243 (MLVK…APEF), 248 to 348 (YRVQ…APEV), 353 to 451 (FTSP…APAF), and 456 to 561 (YTLF…SPFV). N-linked (GlcNAc...) asparagine glycosylation is found at asparagine 418 and asparagine 436. The N-linked (GlcNAc...) asparagine glycan is linked to asparagine 567. Residues 568 to 671 (GSAPCTELVP…LVDGFSQPYL (104 aa)) form the Cadherin 6 domain. Residues 691–711 (VVALASVSSLFLFSVLLFVAV) traverse the membrane as a helical segment. At 712–798 (RLCRRSRAAS…FPNNFGFNIQ (87 aa)) the chain is on the cytoplasmic side.

It localises to the cell membrane. In terms of biological role, potential calcium-dependent cell-adhesion protein. May be involved in the establishment and maintenance of specific neuronal connections in the brain. The polypeptide is Protocadherin beta-13 (PCDHB13) (Homo sapiens (Human)).